Reading from the N-terminus, the 153-residue chain is Myosin regulatory light chain LC-2, mantle muscle (153 aa).

The residue at position 1 (Ala-1) is a Blocked amino end (Ala). 2 consecutive EF-hand domains span residues 13 to 48 (RQMQ…LGRV) and 82 to 117 (DPED…MGDN). Residues Asp-26, Asp-28, Asp-30, and Asp-37 each coordinate Ca(2+).

In terms of biological role, in molluscan muscle, calcium regulation is associated with myosin rather than with actin. Muscle myosin contains two types of light chains: the catalytic light chain, essential for ATPase activity, and the regulatory light chain, a calcium-binding protein responsible for Ca(2+) dependent binding and Ca(2+) dependent Mg-ATPase activity. This Todarodes pacificus (Japanese flying squid) protein is Myosin regulatory light chain LC-2, mantle muscle.